We begin with the raw amino-acid sequence, 226 residues long: NifU-like protein 1, chloroplastic (226 aa).

Residues 1–76 (MQTTTVPMAA…PVTAVQLPLT (76 aa)) constitute a chloroplast transit peptide.

The protein belongs to the NifU family. Homodimer; disulfide-linked.

It is found in the plastid. The protein localises to the chloroplast stroma. Its function is as follows. Molecular scaffold for [Fe-S] cluster assembly of chloroplastic iron-sulfur proteins. The chain is NifU-like protein 1, chloroplastic (NIFU1) from Oryza sativa subsp. japonica (Rice).